Reading from the N-terminus, the 363-residue chain is Protein-glutamate methylesterase/protein-glutamine glutaminase 1 (363 aa).

In terms of domain architecture, Response regulatory spans 7–124 (KVLIVDDSAL…SRGMQEYARE (118 aa)). D58 carries the post-translational modification 4-aspartylphosphate. The CheB-type methylesterase domain occupies 164–356 (FSSTEKIIVI…RRLFGWLESQ (193 aa)). Residues S176, H202, and D298 contribute to the active site.

This sequence belongs to the CheB family. Post-translationally, phosphorylated by CheA. Phosphorylation of the N-terminal regulatory domain activates the methylesterase activity.

It is found in the cytoplasm. The enzyme catalyses [protein]-L-glutamate 5-O-methyl ester + H2O = L-glutamyl-[protein] + methanol + H(+). It carries out the reaction L-glutaminyl-[protein] + H2O = L-glutamyl-[protein] + NH4(+). Involved in chemotaxis. Part of a chemotaxis signal transduction system that modulates chemotaxis in response to various stimuli. Catalyzes the demethylation of specific methylglutamate residues introduced into the chemoreceptors (methyl-accepting chemotaxis proteins or MCP) by CheR. Also mediates the irreversible deamidation of specific glutamine residues to glutamic acid. This Geobacter metallireducens (strain ATCC 53774 / DSM 7210 / GS-15) protein is Protein-glutamate methylesterase/protein-glutamine glutaminase 1.